A 305-amino-acid polypeptide reads, in one-letter code: Carbonic anhydrase 4 (305 aa).

The first 17 residues, 1 to 17 (MQLLLALLALAYVAPST), serve as a signal peptide directing secretion. One can recognise an Alpha-carbonic anhydrase domain in the interval 20–278 (SGWCYEIQTK…LGKRQVFKSH (259 aa)). 2 disulfides stabilise this stretch: cysteine 23–cysteine 35 and cysteine 45–cysteine 222. Histidine 87 serves as the catalytic Proton donor/acceptor. Zn(2+) is bound by residues histidine 114 and histidine 116. An N-linked (GlcNAc...) asparagine glycan is attached at asparagine 123. Residue histidine 139 participates in Zn(2+) binding. N-linked (GlcNAc...) asparagine glycosylation occurs at asparagine 214. A substrate-binding site is contributed by 218–219 (TT). A lipid anchor (GPI-anchor amidated serine) is attached at serine 277. Positions 278 to 305 (HAPGQLLSLPLPTLLVPTLTCLVANFLQ) are cleaved as a propeptide — removed in mature form.

This sequence belongs to the alpha-carbonic anhydrase family. As to quaternary structure, interacts with SLC4A4. Zn(2+) is required as a cofactor.

The protein localises to the cell membrane. It catalyses the reaction hydrogencarbonate + H(+) = CO2 + H2O. With respect to regulation, inhibited by acetazolamide. Its function is as follows. Catalyzes the reversible hydration of carbon dioxide into bicarbonate and protons and thus is essential to maintaining intracellular and extracellular pH. May stimulate the sodium/bicarbonate transporter activity of SLC4A4 that acts in pH homeostasis. It is essential for acid overload removal from the retina and retina epithelium, and acid release in the choriocapillaris in the choroid. The protein is Carbonic anhydrase 4 (Ca4) of Mus musculus (Mouse).